We begin with the raw amino-acid sequence, 98 residues long: MTQASTNILLAFFFSLLGTLIFRSHLMSTLLCLEGMMLTLFIMSTMTALNSQSTVMYTIPIVMLVFAACEAAIGLALLAMISNTYGTDYVQNLNLLQC.

The next 3 membrane-spanning stretches (helical) occupy residues 2–22, 29–49, and 61–81; these read TQASTNILLAFFFSLLGTLIF, TLLCLEGMMLTLFIMSTMTAL, and IVMLVFAACEAAIGLALLAMI.

The protein belongs to the complex I subunit 4L family. Core subunit of respiratory chain NADH dehydrogenase (Complex I) which is composed of 45 different subunits.

It is found in the mitochondrion inner membrane. The enzyme catalyses a ubiquinone + NADH + 5 H(+)(in) = a ubiquinol + NAD(+) + 4 H(+)(out). Functionally, core subunit of the mitochondrial membrane respiratory chain NADH dehydrogenase (Complex I) which catalyzes electron transfer from NADH through the respiratory chain, using ubiquinone as an electron acceptor. Part of the enzyme membrane arm which is embedded in the lipid bilayer and involved in proton translocation. This chain is NADH-ubiquinone oxidoreductase chain 4L (MT-ND4L), found in Calomys musculinus (Drylands vesper mouse).